The primary structure comprises 994 residues: Regulator of telomere elongation helicase 1 homolog (994 aa).

The Helicase ATP-binding domain maps to proline 15–alanine 300. Serine 50 to threonine 57 lines the ATP pocket. [4Fe-4S] cluster-binding residues include cysteine 142, cysteine 160, cysteine 169, and cysteine 208. Positions aspartate 251 to histidine 254 match the DEAH box motif. The interval phenylalanine 876–proline 895 is disordered. Polar residues predominate over residues glycine 882–serine 892.

This sequence belongs to the helicase family. RAD3/XPD subfamily.

The protein localises to the nucleus. The enzyme catalyses ATP + H2O = ADP + phosphate + H(+). Functionally, a probable ATP-dependent DNA helicase implicated in DNA repair and the maintenance of genomic stability. Acts as an anti-recombinase to counteract toxic recombination and limit crossover during meiosis. Regulates meiotic recombination and crossover homeostasis by physically dissociating strand invasion events and thereby promotes noncrossover repair by meiotic synthesis dependent strand annealing (SDSA) as well as disassembly of D loop recombination intermediates. In Caenorhabditis elegans, this protein is Regulator of telomere elongation helicase 1 homolog.